Here is a 190-residue protein sequence, read N- to C-terminus: Large ribosomal subunit protein bL17 (190 aa).

The segment covering 135–165 has biased composition (low complexity); it reads AKAAPAAEEAPAEEAPAAEEAATEEAPAAEE. The interval 135–190 is disordered; the sequence is AKAAPAAEEAPAEEAPAAEEAATEEAPAAEETATEEAAAEEAPAAEEAPAEEKDAK.

The protein belongs to the bacterial ribosomal protein bL17 family. Part of the 50S ribosomal subunit. Contacts protein L32.

The sequence is that of Large ribosomal subunit protein bL17 from Pseudarthrobacter chlorophenolicus (strain ATCC 700700 / DSM 12829 / CIP 107037 / JCM 12360 / KCTC 9906 / NCIMB 13794 / A6) (Arthrobacter chlorophenolicus).